The following is a 436-amino-acid chain: Citrate synthase (436 aa).

Active-site residues include histidine 311 and aspartate 370.

The protein belongs to the citrate synthase family. As to quaternary structure, homohexamer.

It catalyses the reaction oxaloacetate + acetyl-CoA + H2O = citrate + CoA + H(+). It participates in carbohydrate metabolism; tricarboxylic acid cycle; isocitrate from oxaloacetate: step 1/2. With respect to regulation, allosterically inhibited by NADH. In Rickettsia prowazekii (strain Madrid E), this protein is Citrate synthase (gltA).